A 127-amino-acid chain; its full sequence is Calcitonin receptor-stimulating peptide 2 (127 aa).

The N-terminal stretch at 1-25 is a signal peptide; that stretch reads MGFWKLSPFLAIGLLVMYQAGILQA. A propeptide spanning residues 26–81 is cleaved from the precursor; sequence APFRSALENPLESATLTEDEICVLLTAVVKDYVQMKARELQQEQETEGSSLTAQKS. Residues 65–85 form a disordered region; it reads LQQEQETEGSSLTAQKSSCKD. The segment covering 72-81 has biased composition (polar residues); that stretch reads EGSSLTAQKS. A disulfide bridge links C83 with C88.

It belongs to the calcitonin family.

It localises to the secreted. The polypeptide is Calcitonin receptor-stimulating peptide 2 (CRSP2) (Canis lupus familiaris (Dog)).